The following is a 255-amino-acid chain: Proteasome subunit alpha type-3 (255 aa).

S2 is subject to N-acetylserine. An N6-acetyllysine mark is found at K57, K206, and K230. Phosphoserine occurs at positions 243 and 250.

It belongs to the peptidase T1A family. As to quaternary structure, the 26S proteasome consists of a 20S proteasome core and two 19S regulatory subunits. The 20S proteasome core is a barrel-shaped complex made of 28 subunits that are arranged in four stacked rings. The two outer rings are each formed by seven alpha subunits, and the two inner rings are formed by seven beta subunits. The proteolytic activity is exerted by three beta-subunits PSMB5, PSMB6 and PSMB7. Interacts with AURKB. Interacts with CDKN1A. Interacts with MDM2 and RB1. Interacts with the C-terminus of TBXA2R isoform 2. Interacts with DNAJB2. In terms of tissue distribution, detected in liver (at protein level).

It is found in the cytoplasm. Its subcellular location is the nucleus. Functionally, component of the 20S core proteasome complex involved in the proteolytic degradation of most intracellular proteins. This complex plays numerous essential roles within the cell by associating with different regulatory particles. Associated with two 19S regulatory particles, forms the 26S proteasome and thus participates in the ATP-dependent degradation of ubiquitinated proteins. The 26S proteasome plays a key role in the maintenance of protein homeostasis by removing misfolded or damaged proteins that could impair cellular functions, and by removing proteins whose functions are no longer required. Associated with the PA200 or PA28, the 20S proteasome mediates ubiquitin-independent protein degradation. This type of proteolysis is required in several pathways including spermatogenesis (20S-PA200 complex) or generation of a subset of MHC class I-presented antigenic peptides (20S-PA28 complex). Binds to the C-terminus of CDKN1A and thereby mediates its degradation. Negatively regulates the membrane trafficking of the cell-surface thromboxane A2 receptor (TBXA2R) isoform 2. This chain is Proteasome subunit alpha type-3 (Psma3), found in Mus musculus (Mouse).